Consider the following 1068-residue polypeptide: Phosphatidylinositol 4,5-bisphosphate 3-kinase catalytic subunit alpha isoform (1068 aa).

The PI3K-ABD domain occupies 16–105 (MPPRILVECL…QPFLKVIEPV (90 aa)). Residues 187 to 289 (KGQIIVVIWV…GRMPNLMLMA (103 aa)) enclose the PI3K-RBD domain. The C2 PI3K-type domain occupies 330-487 (INSALRIKIL…DWFSSVVKFP (158 aa)). The region spanning 517–694 (LARDNELREN…GLLLESYCRA (178 aa)) is the PIK helical domain. Residues 765–1051 (RLEECRIMSS…QMNDAHHGGW (287 aa)) enclose the PI3K/PI4K catalytic domain. Positions 771–777 (IMSSAKR) are G-loop. Positions 912–920 (GIGDRHNSN) are catalytic loop. The segment at 931–957 (HIDFGHFLDHKKKKFGYKRERVPFVLT) is activation loop.

Belongs to the PI3/PI4-kinase family. In terms of assembly, heterodimer of a catalytic subunit PIK3CA and a p85 regulatory subunit (PIK3R1, PIK3R2 or PIK3R3). Interacts with IRS1 in nuclear extracts. Interacts with RUFY3. Interacts with RASD2. Interacts with APPL1. Interacts with HRAS and KRAS. Interaction with HRAS/KRAS is required for PI3K pathway signaling and cell proliferation stimulated by EGF and FGF2. Interacts with FAM83B; activates the PI3K/AKT signaling cascade.

It carries out the reaction L-seryl-[protein] + ATP = O-phospho-L-seryl-[protein] + ADP + H(+). It catalyses the reaction a 1,2-diacyl-sn-glycero-3-phospho-(1D-myo-inositol) + ATP = a 1,2-diacyl-sn-glycero-3-phospho-(1D-myo-inositol-3-phosphate) + ADP + H(+). The enzyme catalyses a 1,2-diacyl-sn-glycero-3-phospho-(1D-myo-inositol-4,5-bisphosphate) + ATP = a 1,2-diacyl-sn-glycero-3-phospho-(1D-myo-inositol-3,4,5-trisphosphate) + ADP + H(+). The catalysed reaction is 1,2-dioctanoyl-sn-glycero-3-phospho-(1D-myo-inositol-4,5-bisphosphate) + ATP = 1,2-dioctanoyl-sn-glycero-3-phospho-(1D-myo-inositol-3,4,5-trisphosphate) + ADP + H(+). It carries out the reaction 1-octadecanoyl-2-(5Z,8Z,11Z,14Z)-eicosatetraenoyl-sn-glycero-3-phospho-1D-myo-inositol 4,5-bisphosphate + ATP = 1-octadecanoyl-2-(5Z,8Z,11Z,14Z-eicosatetraenoyl)-sn-glycero-3-phospho-(1D-myo-inositol 3,4,5-triphosphate) + ADP + H(+). Its pathway is phospholipid metabolism; phosphatidylinositol phosphate biosynthesis. Functionally, phosphoinositide-3-kinase (PI3K) phosphorylates phosphatidylinositol (PI) and its phosphorylated derivatives at position 3 of the inositol ring to produce 3-phosphoinositides. Uses ATP and PtdIns(4,5)P2 (phosphatidylinositol 4,5-bisphosphate) to generate phosphatidylinositol 3,4,5-trisphosphate (PIP3). PIP3 plays a key role by recruiting PH domain-containing proteins to the membrane, including AKT1 and PDPK1, activating signaling cascades involved in cell growth, survival, proliferation, motility and morphology. Participates in cellular signaling in response to various growth factors. Involved in the activation of AKT1 upon stimulation by receptor tyrosine kinases ligands such as EGF, insulin, IGF1, VEGFA and PDGF. Involved in signaling via insulin-receptor substrate (IRS) proteins. Essential in endothelial cell migration during vascular development through VEGFA signaling, possibly by regulating RhoA activity. Required for lymphatic vasculature development, possibly by binding to RAS and by activation by EGF and FGF2, but not by PDGF. Regulates invadopodia formation through the PDPK1-AKT1 pathway. Participates in cardiomyogenesis in embryonic stem cells through a AKT1 pathway. Participates in vasculogenesis in embryonic stem cells through PDK1 and protein kinase C pathway. In addition to its lipid kinase activity, it displays a serine-protein kinase activity that results in the autophosphorylation of the p85alpha regulatory subunit as well as phosphorylation of other proteins such as 4EBP1, H-Ras, the IL-3 beta c receptor and possibly others. Plays a role in the positive regulation of phagocytosis and pinocytosis. The protein is Phosphatidylinositol 4,5-bisphosphate 3-kinase catalytic subunit alpha isoform (PIK3CA) of Bos taurus (Bovine).